Consider the following 212-residue polypeptide: uncharacterized protein (212 aa).

A helical membrane pass occupies residues 5–25 (IFIILIAVLLIGVNIKKIAAA).

The protein localises to the membrane. This is an uncharacterized protein from Borreliella burgdorferi (strain ATCC 35210 / DSM 4680 / CIP 102532 / B31) (Borrelia burgdorferi).